The chain runs to 318 residues: MAESLLELKKKIASIQKTGQITEAMRMVSGVKLNRTEKLDQEYTIYNDKVRATVSHLMSSQIVKQLGKETKEYNEFGGSASIDYSNFFDLGTLASLVQPRKKIKSTGYLVISGDRGLVGSYNSQVIKNMMSIFKDADAQNKDVKILAVGSVAAQFFKKQNLNVVYEYSGVSDVPTYNEVRDIIQTAVKLYLNGVYDELFVCYTHHVNTLTSAFRVESMLPISDIDINHKDTMPKDYIIEPDIDSVLKTVLPQFSKSMIFGAILDAKTAEHASSMTAMQSASKNADDVVSGLKTKLNRARQAQITTEITEIIGGANALE.

The protein belongs to the ATPase gamma chain family. As to quaternary structure, F-type ATPases have 2 components, CF(1) - the catalytic core - and CF(0) - the membrane proton channel. CF(1) has five subunits: alpha(3), beta(3), gamma(1), delta(1), epsilon(1). CF(0) has three main subunits: a, b and c.

It localises to the cell membrane. Its function is as follows. Produces ATP from ADP in the presence of a proton gradient across the membrane. The gamma chain is believed to be important in regulating ATPase activity and the flow of protons through the CF(0) complex. The protein is ATP synthase gamma chain of Lactobacillus gasseri (strain ATCC 33323 / DSM 20243 / BCRC 14619 / CIP 102991 / JCM 1131 / KCTC 3163 / NCIMB 11718 / NCTC 13722 / AM63).